Consider the following 705-residue polypeptide: MEKPPSIEETPSSEPMEEEEDDDLELFGGYDSFRSYNSSVGSESSSYLEESSEAENEDREAGELPTSPLHLLSPGTPRSLDGSGSEPAVCEMCGIVGTREAFFSKTKRFCSVSCSRSYSSNSKKASILARLQGKPPTKKAKVLHKAAWSAKIGAFLHSQGTGQLADGTPTGQDALVLGFDWGKFLKDHSYKAAPVSCFKHVPLYDQWEDVMKGMKVEVLNSDAVLPSRVYWIASVIQTAGYRVLLRYEGFENDASHDFWCNLGTVDVHPIGWCAINSKILVPPRTIHAKFTDWKGYLMKRLVGSRTLPVDFHIKMVESMKYPFRQGMRLEVVDKSQVSRTRMAVVDTVIGGRLRLLYEDGDSDDDFWCHMWSPLIHPVGWSRRVGHGIKMSERRSDMAHHPTFRKIYCDAVPYLFKKVRAVYTEGGWFEEGMKLEAIDPLNLGNICVATVCKVLLDGYLMVCVDGGPSTDGSDWFCYHASSHAIFPATFCQKNDIELTPPKGYEAQTFNWENYLEKTKSKAAPSRLFNMDCPNHGFKVGMKLEAVDLMEPRLICVATVKRVVHRLLSIHFDGWDSEYDQWVDCESPDIYPVGWCELTGYQLQPPVAAEPATPLKAKEATKKKKKQFGKKRKRIPPTKTRPLRQGSKKPLLEDDPQGARKISSEPVRGDIIAVRVKEEHLDVPSPNKASSPELPVSVENIKQETDD.

The disordered stretch occupies residues 1–84 (MEKPPSIEET…GTPRSLDGSG (84 aa)). Ser13 bears the Phosphoserine mark. The segment covering 15–25 (PMEEEEDDDLE) has biased composition (acidic residues). The span at 38-49 (SSVGSESSSYLE) shows a compositional bias: low complexity. Residues 50–60 (ESSEAENEDRE) show a composition bias toward acidic residues. Ser67 carries the post-translational modification Phosphoserine. Thr76 bears the Phosphothreonine mark. The segment at 81–116 (DGSGSEPAVCEMCGIVGTREAFFSKTKRFCSVSCSR) adopts an FCS-type zinc-finger fold. Zn(2+)-binding residues include Cys90, Cys93, Cys110, and Cys114. MBT repeat units lie at residues 179 to 283 (FDWG…LVPP), 291 to 391 (TDWK…IKMS), 397 to 500 (MAHH…LTPP), and 508 to 604 (FNWE…LQPP). Ser338 is subject to Phosphoserine. Residue Lys405 forms a Glycyl lysine isopeptide (Lys-Gly) (interchain with G-Cter in SUMO2) linkage. Residues 608–705 (EPATPLKAKE…VENIKQETDD (98 aa)) form a disordered region. Basic residues predominate over residues 619–634 (TKKKKKQFGKKRKRIP). Residues Lys647, Lys659, and Lys675 each participate in a glycyl lysine isopeptide (Lys-Gly) (interchain with G-Cter in SUMO2) cross-link. Phosphoserine occurs at positions 683, 688, and 689. A Glycyl lysine isopeptide (Lys-Gly) (interchain with G-Cter in SUMO1); alternate cross-link involves residue Lys700. A Glycyl lysine isopeptide (Lys-Gly) (interchain with G-Cter in SUMO2); alternate cross-link involves residue Lys700.

As to quaternary structure, part of the E2F6.com-1 complex in G0 phase composed of E2F6, MGA, MAX, TFDP1, CBX3, BAT8, EUHMTASE1, RING1, RNF2, MBLR, BAT8 and YAF2.

Its subcellular location is the nucleus. In terms of biological role, putative Polycomb group (PcG) protein. PcG proteins maintain the transcriptionally repressive state of genes, probably via a modification of chromatin, rendering it heritably changed in its expressibility. Its association with a chromatin-remodeling complex suggests that it may contribute to prevent expression of genes that trigger the cell into mitosis. Binds to monomethylated and dimethylated 'Lys-20' on histone H4. Binds histone H3 peptides that are monomethylated or dimethylated on 'Lys-4', 'Lys-9' or 'Lys-27'. This chain is Lethal(3)malignant brain tumor-like protein 2 (L3MBTL2), found in Pongo abelii (Sumatran orangutan).